The following is a 119-amino-acid chain: Inner membrane protein YijD (119 aa).

Over 1–8 the chain is Cytoplasmic; sequence MKQANQDR. A helical membrane pass occupies residues 9–28; it reads GTLLLALVAGLSINGTFAAL. The Periplasmic segment spans residues 29–31; that stretch reads FSS. The helical transmembrane segment at 32 to 50 threads the bilayer; that stretch reads IVPFSVFPIISLVLTVYCL. At 51-61 the chain is on the cytoplasmic side; it reads HQRYLNRTMPV. The chain crosses the membrane as a helical span at residues 62–84; sequence GLPGLAAACFILGVLLYSTVVRA. The Periplasmic portion of the chain corresponds to 85-88; the sequence is EYPD. Residues 89-108 form a helical membrane-spanning segment; the sequence is IGSNFFPAVLSVIMVFWIGA. The Cytoplasmic portion of the chain corresponds to 109–119; the sequence is KMRNRKQEVAE.

It localises to the cell inner membrane. The protein is Inner membrane protein YijD (yijD) of Escherichia coli O6:H1 (strain CFT073 / ATCC 700928 / UPEC).